A 279-amino-acid chain; its full sequence is 1-(5-phosphoribosyl)-5-[(5-phosphoribosylamino)methylideneamino] imidazole-4-carboxamide isomerase (279 aa).

This sequence belongs to the HisA/HisF family.

The protein localises to the cytoplasm. The enzyme catalyses 1-(5-phospho-beta-D-ribosyl)-5-[(5-phospho-beta-D-ribosylamino)methylideneamino]imidazole-4-carboxamide = 5-[(5-phospho-1-deoxy-D-ribulos-1-ylimino)methylamino]-1-(5-phospho-beta-D-ribosyl)imidazole-4-carboxamide. The protein operates within amino-acid biosynthesis; L-histidine biosynthesis; L-histidine from 5-phospho-alpha-D-ribose 1-diphosphate: step 4/9. The sequence is that of 1-(5-phosphoribosyl)-5-[(5-phosphoribosylamino)methylideneamino] imidazole-4-carboxamide isomerase (HIS6) from Candida albicans (Yeast).